The following is a 429-amino-acid chain: Threonine synthase (429 aa).

The residue at position 107 (K107) is an N6-(pyridoxal phosphate)lysine.

The protein belongs to the threonine synthase family. Requires pyridoxal 5'-phosphate as cofactor.

It carries out the reaction O-phospho-L-homoserine + H2O = L-threonine + phosphate. Its pathway is amino-acid biosynthesis; L-threonine biosynthesis; L-threonine from L-aspartate: step 5/5. Catalyzes the gamma-elimination of phosphate from L-phosphohomoserine and the beta-addition of water to produce L-threonine. The protein is Threonine synthase (thrC) of Serratia marcescens.